The primary structure comprises 530 residues: MEIKNSPSSLSSPASYNCSQSILPLEHGPIYIPSSYVDNRHEYSAMTFYSPAVMNYSVPGSTSNLDGGPVRLSTSPNVLWPTSGHLSPLATHCQSSLLYAEPQKSPWCEARSLEHTLPVNRETLKRKLSGSSCASPVTSPNAKRDAHFCPVCSDYASGYHYGVWSCEGCKAFFKRSIQGHNDYICPATNQCTIDKNRRKSCQACRLRKCYEVGMVKCGSRRERCGYRIVRRQRSSSEQVHCLSKAKRNGGHAPRVKELLLSTLSPEQLVLTLLEAEPPNVLVSRPSMPFTEASMMMSLTKLADKELVHMIGWAKKIPGFVELSLLDQVRLLESCWMEVLMVGLMWRSIDHPGKLIFAPDLVLDRDEGKCVEGILEIFDMLLATTSRFRELKLQHKEYLCVKAMILLNSSMYPLASANQEAESSRKLTHLLNAVTDALVWVIAKSGISSQQQSVRLANLLMLLSHVRHISNKGMEHLLSMKCKNVVPVYDLLLEMLNAHTLRGYKSSISGSECSSTEDSKNKESSQNLQSQ.

The interval 1 to 148 (MEIKNSPSSL…SPNAKRDAHF (148 aa)) is modulating. Position 61 is a phosphoserine; alternate (serine 61). O-linked (GlcNAc) serine; alternate glycosylation occurs at serine 61. 2 positions are modified to phosphoserine; by MAPK: serine 87 and serine 105. NR C4-type zinc fingers lie at residues 149 to 169 (CPVC…CEGC) and 185 to 209 (CPAT…LRKC). The segment at residues 149–214 (CPVCSDYASG…RLRKCYEVGM (66 aa)) is a DNA-binding region (nuclear receptor). One can recognise an NR LBD domain in the interval 264–498 (SPEQLVLTLL…DLLLEMLNAH (235 aa)). A compositionally biased stretch (low complexity) spans 506-515 (SISGSECSST). Residues 506-530 (SISGSECSSTEDSKNKESSQNLQSQ) are disordered.

This sequence belongs to the nuclear hormone receptor family. NR3 subfamily. As to quaternary structure, binds DNA as a homodimer. Can form a heterodimer with ESR1. Interacts with NCOA1, NCOA3, NCOA5 and NCOA6 coactivators, leading to a strong increase of transcription of target genes. Interacts with UBE1C and AKAP13. Interacts with DNTTIP2. Interacts with CCDC62 in the presence of estradiol/E2; this interaction seems to enhance the transcription of target genes. Interacts with PRMT2. Interacts with CCAR2 (via N-terminus) in a ligand-independent manner. Interacts with DNAAF4. Interacts with RBM39, in the presence of estradiol (E2). Interacts with STUB1/CHIP. In terms of processing, phosphorylation at Ser-87 and Ser-105 recruits NCOA1. As to expression, expressed in the CA1 region of the hippocampus, expression decreases with age (at protein level). Expressed in prostate, ovary, lung, liver, kidney, fat, bone, brain, uterus and testis.

It localises to the nucleus. In terms of biological role, nuclear hormone receptor. Binds estrogens with an affinity similar to that of ESR1/ER-alpha, and activates expression of reporter genes containing estrogen response elements (ERE) in an estrogen-dependent manner. Lacks ligand binding affinity and suppresses ESR1/ER-alpha and ESR2 isoform 1/ER-beta1 mediated transcriptional activation and may act as a dominant negative regulator of estrogen action. Its function is as follows. Unable to bind DNA and activate transcription due to the truncation of the DNA binding domain. The protein is Estrogen receptor beta (Esr2) of Rattus norvegicus (Rat).